The following is a 161-amino-acid chain: MPSFDIVSKVDMQEVDNAINQTVKEIAQRYDFKGSKCEVTLEKESIKVLADDDFKLKAVIDILQSKFVKRNISPKSLQYGKAEQASGSMVRQIITLQVGISKEKAKEIGQVIKETKLKVQSQIQDDQLRVTGKNIDDLQEVIRVLKGKDLDIDMQFVNFRS.

The protein belongs to the YajQ family.

Its function is as follows. Nucleotide-binding protein. The sequence is that of Nucleotide-binding protein GM21_0633 from Geobacter sp. (strain M21).